A 205-amino-acid chain; its full sequence is Adenylyl-sulfate kinase (205 aa).

31–38 serves as a coordination point for ATP; sequence GLSGAGKS. Residue Ser-105 is the Phosphoserine intermediate of the active site.

It belongs to the APS kinase family.

The enzyme catalyses adenosine 5'-phosphosulfate + ATP = 3'-phosphoadenylyl sulfate + ADP + H(+). The protein operates within sulfur metabolism; hydrogen sulfide biosynthesis; sulfite from sulfate: step 2/3. Catalyzes the synthesis of activated sulfate. This is Adenylyl-sulfate kinase from Shewanella denitrificans (strain OS217 / ATCC BAA-1090 / DSM 15013).